The following is a 335-amino-acid chain: MYAILQKFLFTQDAEWSHDFTINWLKRTQHNFLNVAYKQHIDDKPVEFLGITFKNPVGLAAGLDKNAECIDAFAAMGFGFIEVGTVTPKAQAGNDKPRMFRLPAGQAIINRMGFNNKGVDYLVEQVKQAKYKGVLGINIGKNKTTPEDEALNDYLICLRKVYAHASYVTVNISSPNTPGLRNLQYGDALTQLLEGLKEEQANLEVKHNKRVPILIKIAPDLEDSELDSMVDSFLTVGIDGVIATNTTLDRDRVKGQEHAEEAGGLSGSVLTDKSQQIVSSLCTKLAGNVPVIGVGGIDSPHAAKARIEAGSPLIQVYSALIYQGPKLIKEIVDSL.

Residues 61–65 (AGLDK) and Thr-85 each bind FMN. Substrate is bound at residue Lys-65. A substrate-binding site is contributed by 110–114 (NRMGF). Positions 138 and 171 each coordinate FMN. Asn-171 contributes to the substrate binding site. Residue Ser-174 is the Nucleophile of the active site. Asn-176 provides a ligand contact to substrate. Positions 216 and 244 each coordinate FMN. 245 to 246 (NT) serves as a coordination point for substrate. FMN is bound by residues Gly-267, Gly-296, and 317 to 318 (YS).

This sequence belongs to the dihydroorotate dehydrogenase family. Type 2 subfamily. As to quaternary structure, monomer. FMN is required as a cofactor.

It is found in the cell membrane. It carries out the reaction (S)-dihydroorotate + a quinone = orotate + a quinol. The protein operates within pyrimidine metabolism; UMP biosynthesis via de novo pathway; orotate from (S)-dihydroorotate (quinone route): step 1/1. Catalyzes the conversion of dihydroorotate to orotate with quinone as electron acceptor. This chain is Dihydroorotate dehydrogenase (quinone), found in Pseudoalteromonas atlantica (strain T6c / ATCC BAA-1087).